A 192-amino-acid polypeptide reads, in one-letter code: MLKFDNLILASSSEQRLSLLEQIGVIPGQVVSPDIDEVVLKKELPKVYSIRIAKEKGTKVRVLYPDKFILSADTVVCCGRRVLPKAETEEQALECIRLISGRRHRVYTTVCLYTPYNKLHCRNVMTIVKFKHLSMQEINSYIMSGQWKGKSGACSIQTSAGKFVLSINGSYSSVIGLPLYETYSILSQYFSI.

Asp-73 serves as the catalytic Proton acceptor.

This sequence belongs to the Maf family. Requires a divalent metal cation as cofactor.

It is found in the cytoplasm. It catalyses the reaction a ribonucleoside 5'-triphosphate + H2O = a ribonucleoside 5'-phosphate + diphosphate + H(+). It carries out the reaction a 2'-deoxyribonucleoside 5'-triphosphate + H2O = a 2'-deoxyribonucleoside 5'-phosphate + diphosphate + H(+). Its function is as follows. Nucleoside triphosphate pyrophosphatase. May have a dual role in cell division arrest and in preventing the incorporation of modified nucleotides into cellular nucleic acids. The chain is Nucleoside triphosphate pyrophosphatase from Ehrlichia chaffeensis (strain ATCC CRL-10679 / Arkansas).